Here is a 288-residue protein sequence, read N- to C-terminus: NAD kinase (288 aa).

Catalysis depends on D70, which acts as the Proton acceptor. Residues 70–71, 144–145, R155, K172, D174, 185–190, and Q245 each bind NAD(+); these read DG, ND, and TGYSLS.

Belongs to the NAD kinase family. It depends on a divalent metal cation as a cofactor.

The protein localises to the cytoplasm. It catalyses the reaction NAD(+) + ATP = ADP + NADP(+) + H(+). Involved in the regulation of the intracellular balance of NAD and NADP, and is a key enzyme in the biosynthesis of NADP. Catalyzes specifically the phosphorylation on 2'-hydroxyl of the adenosine moiety of NAD to yield NADP. The polypeptide is NAD kinase (Citrifermentans bemidjiense (strain ATCC BAA-1014 / DSM 16622 / JCM 12645 / Bem) (Geobacter bemidjiensis)).